Here is a 251-residue protein sequence, read N- to C-terminus: Octanoyltransferase (251 aa).

The BPL/LPL catalytic domain occupies 49–230; that stretch reads DEIADQILVL…DLDDAFAGRL (182 aa). Substrate contacts are provided by residues 87–94, 160–162, and 173–175; these read RGGRITWH, ALG, and GLA. Cys-191 functions as the Acyl-thioester intermediate in the catalytic mechanism.

The protein belongs to the LipB family.

It localises to the cytoplasm. The catalysed reaction is octanoyl-[ACP] + L-lysyl-[protein] = N(6)-octanoyl-L-lysyl-[protein] + holo-[ACP] + H(+). It participates in protein modification; protein lipoylation via endogenous pathway; protein N(6)-(lipoyl)lysine from octanoyl-[acyl-carrier-protein]: step 1/2. In terms of biological role, catalyzes the transfer of endogenously produced octanoic acid from octanoyl-acyl-carrier-protein onto the lipoyl domains of lipoate-dependent enzymes. Lipoyl-ACP can also act as a substrate although octanoyl-ACP is likely to be the physiological substrate. This Corynebacterium efficiens (strain DSM 44549 / YS-314 / AJ 12310 / JCM 11189 / NBRC 100395) protein is Octanoyltransferase.